The chain runs to 256 residues: Type III pantothenate kinase (256 aa).

Residue 6-13 coordinates ATP; it reads DCGNTNTV. Residue 107-110 participates in substrate binding; it reads GPDR. The Proton acceptor role is filled by aspartate 109. Aspartate 129 contributes to the K(+) binding site. ATP is bound at residue threonine 132. Threonine 184 is a binding site for substrate.

It belongs to the type III pantothenate kinase family. As to quaternary structure, homodimer. The cofactor is NH4(+). It depends on K(+) as a cofactor.

The protein resides in the cytoplasm. The catalysed reaction is (R)-pantothenate + ATP = (R)-4'-phosphopantothenate + ADP + H(+). It functions in the pathway cofactor biosynthesis; coenzyme A biosynthesis; CoA from (R)-pantothenate: step 1/5. Catalyzes the phosphorylation of pantothenate (Pan), the first step in CoA biosynthesis. The chain is Type III pantothenate kinase from Dinoroseobacter shibae (strain DSM 16493 / NCIMB 14021 / DFL 12).